Consider the following 366-residue polypeptide: tRNA/tmRNA (uracil-C(5))-methyltransferase (366 aa).

Residues Gln190, Tyr218, Asn223, Glu239, and Asp299 each coordinate S-adenosyl-L-methionine. Cys324 serves as the catalytic Nucleophile. Catalysis depends on Glu358, which acts as the Proton acceptor.

The protein belongs to the class I-like SAM-binding methyltransferase superfamily. RNA M5U methyltransferase family. TrmA subfamily.

The enzyme catalyses uridine(54) in tRNA + S-adenosyl-L-methionine = 5-methyluridine(54) in tRNA + S-adenosyl-L-homocysteine + H(+). The catalysed reaction is uridine(341) in tmRNA + S-adenosyl-L-methionine = 5-methyluridine(341) in tmRNA + S-adenosyl-L-homocysteine + H(+). Its function is as follows. Dual-specificity methyltransferase that catalyzes the formation of 5-methyluridine at position 54 (m5U54) in all tRNAs, and that of position 341 (m5U341) in tmRNA (transfer-mRNA). This is tRNA/tmRNA (uracil-C(5))-methyltransferase from Escherichia coli O157:H7 (strain EC4115 / EHEC).